Here is a 263-residue protein sequence, read N- to C-terminus: HTH-type transcriptional repressor NanR (263 aa).

The segment at 1-23 (MSPMNAFDPQAEDSTTTIGRNLR) is disordered. Residues 30–98 (KKLSEMVEEE…NGERARVSRP (69 aa)) enclose the HTH gntR-type domain. The segment at residues 58–77 (ERELMAFFNVGRPSVREALA) is a DNA-binding region (H-T-H motif).

Belongs to the NanR family.

Transcriptional repressor that controls expression of the genes required for the catabolism of sialic acids. The chain is HTH-type transcriptional repressor NanR from Escherichia coli O45:K1 (strain S88 / ExPEC).